Reading from the N-terminus, the 432-residue chain is Trigger factor (432 aa).

The 86-residue stretch at 161–246 (DDRVTIDFVG…LKKIENMVLP (86 aa)) folds into the PPIase FKBP-type domain.

This sequence belongs to the FKBP-type PPIase family. Tig subfamily.

The protein localises to the cytoplasm. It catalyses the reaction [protein]-peptidylproline (omega=180) = [protein]-peptidylproline (omega=0). In terms of biological role, involved in protein export. Acts as a chaperone by maintaining the newly synthesized protein in an open conformation. Functions as a peptidyl-prolyl cis-trans isomerase. The sequence is that of Trigger factor from Haemophilus influenzae (strain 86-028NP).